Reading from the N-terminus, the 345-residue chain is Aspartate--ammonia ligase (345 aa).

Belongs to the class-II aminoacyl-tRNA synthetase family. AsnA subfamily.

The protein resides in the cytoplasm. The enzyme catalyses L-aspartate + NH4(+) + ATP = L-asparagine + AMP + diphosphate + H(+). Its pathway is amino-acid biosynthesis; L-asparagine biosynthesis; L-asparagine from L-aspartate (ammonia route): step 1/1. This Parabacteroides distasonis (strain ATCC 8503 / DSM 20701 / CIP 104284 / JCM 5825 / NCTC 11152) protein is Aspartate--ammonia ligase.